A 190-amino-acid chain; its full sequence is dCTP deaminase (190 aa).

DCTP is bound at residue 113–118 (KSTYAR). The Proton donor/acceptor role is filled by glutamate 139. 4 residues coordinate dCTP: glutamine 158, tyrosine 172, lysine 181, and glutamine 182.

This sequence belongs to the dCTP deaminase family. As to quaternary structure, homotrimer.

The catalysed reaction is dCTP + H2O + H(+) = dUTP + NH4(+). Its pathway is pyrimidine metabolism; dUMP biosynthesis; dUMP from dCTP (dUTP route): step 1/2. In terms of biological role, catalyzes the deamination of dCTP to dUTP. This Chlamydia felis (strain Fe/C-56) (Chlamydophila felis) protein is dCTP deaminase.